The sequence spans 495 residues: Glycerol kinase (495 aa).

Threonine 16 contributes to the ADP binding site. ATP is bound by residues threonine 16 and threonine 17. Residue threonine 16 participates in sn-glycerol 3-phosphate binding. Arginine 20 serves as a coordination point for ADP. 4 residues coordinate sn-glycerol 3-phosphate: arginine 86, glutamate 87, tyrosine 138, and aspartate 246. Glycerol-binding residues include arginine 86, glutamate 87, tyrosine 138, aspartate 246, and glutamine 247. Threonine 268 and glycine 316 together coordinate ADP. Threonine 268, glycine 316, glutamine 320, and glycine 417 together coordinate ATP. ADP contacts are provided by glycine 417 and asparagine 421.

The protein belongs to the FGGY kinase family.

The enzyme catalyses glycerol + ATP = sn-glycerol 3-phosphate + ADP + H(+). The protein operates within polyol metabolism; glycerol degradation via glycerol kinase pathway; sn-glycerol 3-phosphate from glycerol: step 1/1. Inhibited by fructose 1,6-bisphosphate (FBP). Its function is as follows. Key enzyme in the regulation of glycerol uptake and metabolism. Catalyzes the phosphorylation of glycerol to yield sn-glycerol 3-phosphate. The polypeptide is Glycerol kinase (Synechocystis sp. (strain ATCC 27184 / PCC 6803 / Kazusa)).